The chain runs to 202 residues: Zinc metalloproteinase barnettlysin-1 (202 aa).

A Peptidase M12B domain is found at Arg6–Asn200. Ca(2+) is bound by residues Glu9 and Asp93. Intrachain disulfides connect Cys117–Cys197, Cys157–Cys181, and Cys159–Cys164. A Zn(2+)-binding site is contributed by His142. Glu143 is a catalytic residue. 2 residues coordinate Zn(2+): His146 and His152. The Ca(2+) site is built by Cys197 and Asn200.

As to quaternary structure, monomer. The cofactor is Zn(2+). Expressed by the venom gland.

Its subcellular location is the secreted. Functionally, non-hemorrhagic metalloproteinase that hydrolyzes the alpha chains of fibrinogen and fibrin but has no activity on beta- and gamma-chains. Cleaves X-Leu bonds. Inhibits platelet aggregation induced by the von Willebrand factor (VWF) (IC(50) is 1.4 uM) and type I collagen (IC(50) is 3.2 uM). Acts by cleaving the vWF and its receptor GPIb, and by cleaving the collagen-binding Alpha-2A domain of the collagen receptor alpha-2/beta-1 integrin (ITGA2/ITGB1). Also degrades the extracellular matrix protein fibronectin (FN1), but has no effect on laminin and type I collagen. This is Zinc metalloproteinase barnettlysin-1 from Bothrops barnetti (Barnett's lancehead).